A 272-amino-acid chain; its full sequence is Large ribosomal subunit protein uL29m (272 aa).

Disordered regions lie at residues 1-29 (MAAAAMRPSMGALGRISSSTPSPLRPLTQ), 56-87 (KHRGESAIHRSGTRWRLSMSDEPLPRPVPRNK), and 227-272 (AAAT…TPRL). Low complexity predominate over residues 17-29 (SSSTPSPLRPLTQ). Composition is skewed to low complexity over residues 227–238 (AAATEGEQQAAE) and 249–259 (PATAATPESAT). Residues 260–272 (IPSSQQQTDTPRL) show a composition bias toward polar residues.

The protein belongs to the universal ribosomal protein uL29 family. In terms of assembly, component of the mitochondrial large ribosomal subunit. Mature mitochondrial ribosomes consist of a small (37S) and a large (54S) subunit. The 37S subunit contains at least 33 different proteins and 1 molecule of RNA (15S). The 54S subunit contains at least 45 different proteins and 1 molecule of RNA (21S).

It localises to the mitochondrion. The polypeptide is Large ribosomal subunit protein uL29m (MRPL4) (Chaetomium globosum (strain ATCC 6205 / CBS 148.51 / DSM 1962 / NBRC 6347 / NRRL 1970) (Soil fungus)).